Here is a 456-residue protein sequence, read N- to C-terminus: Putative E3 ubiquitin-protein ligase XBAT31 (456 aa).

5 ANK repeats span residues D45–L74, H78–M107, N112–V141, K157–A186, and P194–R224. The RING-type zinc-finger motif lies at C319 to R368.

It catalyses the reaction S-ubiquitinyl-[E2 ubiquitin-conjugating enzyme]-L-cysteine + [acceptor protein]-L-lysine = [E2 ubiquitin-conjugating enzyme]-L-cysteine + N(6)-ubiquitinyl-[acceptor protein]-L-lysine.. The protein operates within protein modification; protein ubiquitination. Functionally, no E3 ubiquitin-protein ligase activity observed when associated with the E2 enzyme UBC8 in vitro. This Arabidopsis thaliana (Mouse-ear cress) protein is Putative E3 ubiquitin-protein ligase XBAT31 (XBAT31).